A 32-amino-acid polypeptide reads, in one-letter code: Ranatuerin-3 (32 aa).

Cys23 and Cys28 are disulfide-bonded.

Belongs to the frog skin active peptide (FSAP) family. Ranatuerin subfamily. As to expression, expressed by the skin glands.

The protein resides in the secreted. Its function is as follows. Antibacterial activity against Gram-positive bacterium S.aureus (MIC=60 uM). Shows no detectable hemolytic activity towards human erythrocytes. The protein is Ranatuerin-3 of Aquarana catesbeiana (American bullfrog).